The chain runs to 632 residues: tRNA uridine 5-carboxymethylaminomethyl modification enzyme MnmG (632 aa).

G13–G18 is an FAD binding site. Position 273 to 287 (G273 to F287) interacts with NAD(+).

This sequence belongs to the MnmG family. As to quaternary structure, homodimer. Heterotetramer of two MnmE and two MnmG subunits. Requires FAD as cofactor.

The protein localises to the cytoplasm. In terms of biological role, NAD-binding protein involved in the addition of a carboxymethylaminomethyl (cmnm) group at the wobble position (U34) of certain tRNAs, forming tRNA-cmnm(5)s(2)U34. In Psychrobacter cryohalolentis (strain ATCC BAA-1226 / DSM 17306 / VKM B-2378 / K5), this protein is tRNA uridine 5-carboxymethylaminomethyl modification enzyme MnmG.